The primary structure comprises 351 residues: Alanine racemase (351 aa).

K34 serves as the catalytic Proton acceptor; specific for D-alanine. K34 is subject to N6-(pyridoxal phosphate)lysine. Residue R126 participates in substrate binding. Catalysis depends on Y248, which acts as the Proton acceptor; specific for L-alanine. Position 296 (M296) interacts with substrate.

It belongs to the alanine racemase family. Pyridoxal 5'-phosphate serves as cofactor.

It catalyses the reaction L-alanine = D-alanine. The protein operates within amino-acid biosynthesis; D-alanine biosynthesis; D-alanine from L-alanine: step 1/1. In terms of biological role, catalyzes the interconversion of L-alanine and D-alanine. May also act on other amino acids. The protein is Alanine racemase (alr) of Deinococcus radiodurans (strain ATCC 13939 / DSM 20539 / JCM 16871 / CCUG 27074 / LMG 4051 / NBRC 15346 / NCIMB 9279 / VKM B-1422 / R1).